We begin with the raw amino-acid sequence, 489 residues long: GTPase Der (489 aa).

2 EngA-type G domains span residues 30-199 (PVVS…KDKP) and 227-403 (FRLA…SRSH). GTP contacts are provided by residues 36–43 (GRQNVGKS), 85–89 (DTPGL), 151–154 (NKAD), 233–240 (GKPNSGKS), 280–284 (DTAGI), and 345–348 (NKWD). The KH-like domain maps to 404-488 (RKVSTSELNK…PIRLEFRSDR (85 aa)).

Belongs to the TRAFAC class TrmE-Era-EngA-EngB-Septin-like GTPase superfamily. EngA (Der) GTPase family. In terms of assembly, associates with the 50S ribosomal subunit.

Its function is as follows. GTPase that plays an essential role in the late steps of ribosome biogenesis. The polypeptide is GTPase Der (Leptospira interrogans serogroup Icterohaemorrhagiae serovar copenhageni (strain Fiocruz L1-130)).